A 267-amino-acid chain; its full sequence is MIDRRKVRNAFHRGAADYDAYAAVQKRVMERILSLLFAEGVEPARILDVGAGTGALALRLADRYPSAAITCVDLAHGMARQARDNLGRTMERLVAVADAEHLPLRDGVFDLVVSTSTFQWLTTLDRAFAEARRVLADDGLFAFALFGDGTFKELKASYRAALHSVPRGGRDRTHRFFTRDEVRAALARAGFRSVEVFDEDEVEYHPDVPAFLRSVKRIGAGNASPVAGRGLSGRRVMETMMRTYAERFGGADGIPATYTVVYGVGKR.

Belongs to the methyltransferase superfamily.

It catalyses the reaction malonyl-[ACP] + S-adenosyl-L-methionine = malonyl-[ACP] methyl ester + S-adenosyl-L-homocysteine. Its pathway is cofactor biosynthesis; biotin biosynthesis. Converts the free carboxyl group of a malonyl-thioester to its methyl ester by transfer of a methyl group from S-adenosyl-L-methionine (SAM). It allows to synthesize pimeloyl-ACP via the fatty acid synthetic pathway. This is Malonyl-[acyl-carrier protein] O-methyltransferase from Geobacter sulfurreducens (strain ATCC 51573 / DSM 12127 / PCA).